We begin with the raw amino-acid sequence, 464 residues long: Non-neuronal cytoplasmic intermediate filament protein (464 aa).

Positions 1 to 14 (MSTQTKKVTRTIIT) are enriched in polar residues. Residues 1–59 (MSTQTKKVTRTIITSSSGGGGGGGGGRASYSSSGRFSGGGGRMRAGGVTSRRSVGSSYS) form a disordered region. Positions 1 to 101 (MSTQTKKVTR…RMTRAHEKQE (101 aa)) are head. Gly residues predominate over residues 17–27 (SGGGGGGGGGR). The span at 45-59 (AGGVTSRRSVGSSYS) shows a compositional bias: low complexity. The IF rod domain occupies 98–413 (EKQELSHLND…KLLEGEEIRL (316 aa)). The segment at 102–133 (LSHLNDRFASYIDKVRYLQERNSKLEAQIKIQ) is coil 1A. The segment at 134-144 (ESREAPNIKDL) is linker 1. The coil 1B stretch occupies residues 145 to 237 (YEKELRDLRA…FLKRVHDEEI (93 aa)). A linker 2 region spans residues 238–264 (RQLQDQLNESLTIVEVDSRAASTFAPG). A coil 2 region spans residues 265-413 (PDLTEALREI…KLLEGEEIRL (149 aa)). The segment at 414-464 (FGESKEGVQQTSSSSSSSYQYSMKSGSGGGGGGSSSGKQQVTVSVSSGEEK) is tail. Residues 415–464 (GESKEGVQQTSSSSSSSYQYSMKSGSGGGGGGSSSGKQQVTVSVSSGEEK) form a disordered region. Over residues 420–438 (GVQQTSSSSSSSYQYSMKS) the composition is skewed to low complexity. The segment covering 439 to 448 (GSGGGGGGSS) has biased composition (gly residues). Positions 449–464 (SGKQQVTVSVSSGEEK) are enriched in low complexity.

It belongs to the intermediate filament family. Can form homopolymers.

It localises to the cytoplasm. The protein is Non-neuronal cytoplasmic intermediate filament protein of Branchiostoma lanceolatum (Common lancelet).